A 561-amino-acid polypeptide reads, in one-letter code: Malto-oligosyltrehalose trehalohydrolase (561 aa).

253-258 (RLDAVH) is a binding site for substrate. Asp255 acts as the Nucleophile in catalysis. Glu286 acts as the Proton donor in catalysis. Residues 311 to 315 (DDFHH) and 379 to 384 (HDQVGN) contribute to the substrate site.

It belongs to the glycosyl hydrolase 13 family. As to quaternary structure, homodimer.

It localises to the cytoplasm. It catalyses the reaction hydrolysis of (1-&gt;4)-alpha-D-glucosidic linkage in 4-alpha-D-[(1-&gt;4)-alpha-D-glucanosyl]n trehalose to yield trehalose and (1-&gt;4)-alpha-D-glucan.. The protein operates within glycan biosynthesis; trehalose biosynthesis. This is Malto-oligosyltrehalose trehalohydrolase (treZ) from Saccharolobus solfataricus (strain ATCC 35092 / DSM 1617 / JCM 11322 / P2) (Sulfolobus solfataricus).